Here is a 273-residue protein sequence, read N- to C-terminus: Mediator of RNA polymerase II transcription subunit 27 (273 aa).

This sequence belongs to the Mediator complex subunit 27 family. Component of the Mediator complex.

The protein localises to the nucleus. Functionally, component of the Mediator complex, a coactivator involved in the regulated transcription of nearly all RNA polymerase II-dependent genes. Mediator functions as a bridge to convey information from gene-specific regulatory proteins to the basal RNA polymerase II transcription machinery. Mediator is recruited to promoters by direct interactions with regulatory proteins and serves as a scaffold for the assembly of a functional preinitiation complex with RNA polymerase II and the general transcription factors. This is Mediator of RNA polymerase II transcription subunit 27 (med27) from Schizosaccharomyces pombe (strain 972 / ATCC 24843) (Fission yeast).